Consider the following 464-residue polypeptide: Protein VAPYRIN-LIKE (464 aa).

One can recognise an MSP domain in the interval 3-124 (RLVKTEFNEV…RDAVITVILV (122 aa)). ANK repeat units lie at residues 153–182 (NLTNLMKPAVESGKVEYVTDLITAGGDVNF), 186–215 (NGKSLIPFAIRTGKLAVLKLLVANGCRIND), 217–246 (VDFVLHEAAIIDRVDVVKFLFESFCDELDV), 252–281 (EMMTPIHVSASEGHVSLIEFFVSIGGNANA), 285–314 (RRWTPLHHAASRNHLKAVEFLLENSDVKYA), 318–347 (NGKTAFEIASESGHTRLFGVLRWGDALLQA), 349–368 (RVDDVHALKKCLGEGAEVNR), 372–401 (NGWTPLHWASFKGRIKSVKVLLEHGAEVDS), and 405–435 (AGYTPLHCAAEAGHLQVALVLIAHGGCQTNL).

As to expression, expressed in roots.

Its subcellular location is the cytoplasm. The protein resides in the nucleus. The protein localises to the cell membrane. May be involved in arbuscular mycorrhizal (AM) symbiosis with AM fungi and in nitrogen-fixing rhizobial bacteria symbiosis leading to the formation of root nodules. The sequence is that of Protein VAPYRIN-LIKE from Medicago truncatula (Barrel medic).